The chain runs to 41 residues: Cytochrome b559 subunit beta (41 aa).

Residues 16-32 (WLAVHALAVPTVFFLGS) form a helical membrane-spanning segment. His-20 is a binding site for heme.

Belongs to the PsbE/PsbF family. In terms of assembly, heterodimer of an alpha subunit and a beta subunit. PSII is composed of 1 copy each of membrane proteins PsbA, PsbB, PsbC, PsbD, PsbE, PsbF, PsbH, PsbI, PsbJ, PsbK, PsbL, PsbM, PsbT, PsbX, PsbY, PsbZ, Psb30/Ycf12, at least 3 peripheral proteins of the oxygen-evolving complex and a large number of cofactors. It forms dimeric complexes. It depends on heme b as a cofactor.

It is found in the plastid. The protein localises to the chloroplast thylakoid membrane. In terms of biological role, this b-type cytochrome is tightly associated with the reaction center of photosystem II (PSII). PSII is a light-driven water:plastoquinone oxidoreductase that uses light energy to abstract electrons from H(2)O, generating O(2) and a proton gradient subsequently used for ATP formation. It consists of a core antenna complex that captures photons, and an electron transfer chain that converts photonic excitation into a charge separation. In Nephroselmis olivacea (Green alga), this protein is Cytochrome b559 subunit beta.